We begin with the raw amino-acid sequence, 389 residues long: Leucine aminopeptidase 1 (389 aa).

Residues Met-1 to Ala-18 form the signal peptide. Positions Ala-19–Ser-89 are excised as a propeptide. Residues Asn-99, Asn-156, and Asn-180 are each glycosylated (N-linked (GlcNAc...) asparagine). His-188, Asp-207, Glu-246, and Asp-273 together coordinate Zn(2+). A disulfide bond links Cys-322 and Cys-326. His-355 provides a ligand contact to Zn(2+).

It belongs to the peptidase M28 family. M28E subfamily. As to quaternary structure, monomer. Requires Zn(2+) as cofactor.

Its subcellular location is the secreted. Extracellular aminopeptidase that allows assimilation of proteinaceous substrates. This Phaeosphaeria nodorum (strain SN15 / ATCC MYA-4574 / FGSC 10173) (Glume blotch fungus) protein is Leucine aminopeptidase 1 (LAP1).